The chain runs to 268 residues: Protein atz-1 (268 aa).

The stretch at 171-243 forms a coiled coil; sequence VDDANKLTEV…EEGEEDYEEE (73 aa). The segment at 229–268 is disordered; it reads DLMKEEEGEEDYEEEENYEVEEDFEDEEEYDEEGEEEDYE. The span at 231-268 shows a compositional bias: acidic residues; it reads MKEEEGEEDYEEEENYEVEEDFEDEEEYDEEGEEEDYE.

It is found in the nucleus. Plays a role in meiosis, germline development and oocyte morphogenesis. May play a role in DNA replication. In the germline, involved in the maintenance of transition zone nuclei and in chromosome structure and organization, but not required for mitotic proliferation. In Caenorhabditis elegans, this protein is Protein atz-1.